We begin with the raw amino-acid sequence, 102 residues long: Class I hydrophobin 1 (102 aa).

The signal sequence occupies residues 1–18 (MSLFKILVAAATVATALA). Cystine bridges form between cysteine 37–cysteine 84, cysteine 45–cysteine 78, cysteine 46–cysteine 63, and cysteine 85–cysteine 97.

The protein belongs to the fungal hydrophobin family.

It localises to the secreted. The protein resides in the cell wall. In terms of biological role, aerial growth, conidiation, and dispersal of filamentous fungi in the environment rely upon a capability of their secreting small amphipathic proteins called hydrophobins (HPBs) with low sequence identity. Class I can self-assemble into an outermost layer of rodlet bundles on aerial cell surfaces, conferring cellular hydrophobicity that supports fungal growth, development and dispersal; whereas Class II form highly ordered films at water-air interfaces through intermolecular interactions but contribute nothing to the rodlet structure. Hyd1 is essential for stress tolerance, conidial hydrophobicity, adhesion to insect cuticle, and insect infectivity/pathogenicity. Plays a neglectable role in hyphal growth and asexual development. This Metarhizium robertsii (strain ARSEF 23 / ATCC MYA-3075) (Metarhizium anisopliae (strain ARSEF 23)) protein is Class I hydrophobin 1.